We begin with the raw amino-acid sequence, 87 residues long: MSETKNVRTLQGKVVSDKMDKTVTVLVERKVKHSLYGKIIRLSTKIHAHDENNQYGIGDVVVISESRPLSKTKSWVVSELVEKARSI.

It belongs to the universal ribosomal protein uS17 family. In terms of assembly, part of the 30S ribosomal subunit.

In terms of biological role, one of the primary rRNA binding proteins, it binds specifically to the 5'-end of 16S ribosomal RNA. This chain is Small ribosomal subunit protein uS17, found in Neisseria gonorrhoeae (strain ATCC 700825 / FA 1090).